Here is a 335-residue protein sequence, read N- to C-terminus: N-acetyl-gamma-glutamyl-phosphate reductase (335 aa).

C147 is a catalytic residue.

This sequence belongs to the NAGSA dehydrogenase family. Type 1 subfamily.

The protein localises to the cytoplasm. The enzyme catalyses N-acetyl-L-glutamate 5-semialdehyde + phosphate + NADP(+) = N-acetyl-L-glutamyl 5-phosphate + NADPH + H(+). It functions in the pathway amino-acid biosynthesis; L-arginine biosynthesis; N(2)-acetyl-L-ornithine from L-glutamate: step 3/4. Functionally, catalyzes the NADPH-dependent reduction of N-acetyl-5-glutamyl phosphate to yield N-acetyl-L-glutamate 5-semialdehyde. The protein is N-acetyl-gamma-glutamyl-phosphate reductase of Campylobacter hominis (strain ATCC BAA-381 / DSM 21671 / CCUG 45161 / LMG 19568 / NCTC 13146 / CH001A).